The primary structure comprises 242 residues: Platelet-derived growth factor subunit B (242 aa).

A signal peptide spans 1 to 20 (MNRCWALFLSLCCYLRLVSA). Positions 21-81 (EGDPIPEELY…ELESLSRGRR (61 aa)) are cleaved as a propeptide — removed in mature form. N63 is a glycosylation site (N-linked (GlcNAc...) asparagine). 3 cysteine pairs are disulfide-bonded: C97–C141, C130–C178, and C134–C180. A compositionally biased stretch (basic residues) spans 219–232 (PPKGKHRKFKHTHD). A disordered region spans residues 219-242 (PPKGKHRKFKHTHDKKALKETLGA). Over residues 233-242 (KKALKETLGA) the composition is skewed to basic and acidic residues.

The protein belongs to the PDGF/VEGF growth factor family. Antiparallel homodimer; disulfide-linked. Antiparallel heterodimer with PDGFA; disulfide-linked. The PDGFB homodimer interacts with PDGFRA and PDGFRB homodimers, and with heterodimers formed by PDGFRA and PDGFRB. The heterodimer composed of PDGFA and PDGFB interacts with PDGFRB homodimers, and with heterodimers formed by PDGFRA and PDGFRB. Interacts with XLKD1. Interacts with LRP1. Interacts with SORL1 (via the N-terminal ectodomain). Interacts with CD82; this interaction inhibits PDGFB-mediated signaling pathway.

The protein localises to the secreted. Its function is as follows. Growth factor that plays an essential role in the regulation of embryonic development, cell proliferation, cell migration, survival and chemotaxis. Potent mitogen for cells of mesenchymal origin. Required for normal proliferation and recruitment of pericytes and vascular smooth muscle cells in the central nervous system, skin, lung, heart and placenta. Required for normal blood vessel development, and for normal development of kidney glomeruli. Plays an important role in wound healing. Signaling is modulated by the formation of heterodimers with PDGFA. This is Platelet-derived growth factor subunit B (PDGFB) from Canis lupus familiaris (Dog).